A 275-amino-acid chain; its full sequence is Phosphatidylglycerol--prolipoprotein diacylglyceryl transferase (275 aa).

7 helical membrane passes run 22 to 42, 61 to 81, 96 to 116, 125 to 145, 177 to 197, 204 to 224, and 238 to 258; these read LSVR…MWLA, LLFY…VLFY, IWTG…AMIW, FFTV…VGRI, SQLY…NLFW, GAIS…VEFV, and ISMG…MVWA. An a 1,2-diacyl-sn-glycero-3-phospho-(1'-sn-glycerol)-binding site is contributed by Arg144.

This sequence belongs to the Lgt family.

The protein localises to the cell inner membrane. The enzyme catalyses L-cysteinyl-[prolipoprotein] + a 1,2-diacyl-sn-glycero-3-phospho-(1'-sn-glycerol) = an S-1,2-diacyl-sn-glyceryl-L-cysteinyl-[prolipoprotein] + sn-glycerol 1-phosphate + H(+). Its pathway is protein modification; lipoprotein biosynthesis (diacylglyceryl transfer). Catalyzes the transfer of the diacylglyceryl group from phosphatidylglycerol to the sulfhydryl group of the N-terminal cysteine of a prolipoprotein, the first step in the formation of mature lipoproteins. This chain is Phosphatidylglycerol--prolipoprotein diacylglyceryl transferase, found in Aeromonas salmonicida (strain A449).